A 271-amino-acid polypeptide reads, in one-letter code: Membrane protein insertase YidC 1 (271 aa).

The N-terminal stretch at 1–20 (MKKKLKTFSLILLTGSLLVA) is a signal peptide. The N-palmitoyl cysteine moiety is linked to residue cysteine 21. The S-diacylglycerol cysteine moiety is linked to residue cysteine 21. 4 helical membrane passes run 45-65 (IQWL…TLII), 124-144 (YASV…FQAL), 163-183 (PDPY…STWL), and 201-221 (VMPF…VLYW).

The protein belongs to the OXA1/ALB3/YidC family. Type 2 subfamily.

The protein resides in the cell membrane. Its function is as follows. Required for the insertion and/or proper folding and/or complex formation of integral membrane proteins into the membrane. Involved in integration of membrane proteins that insert both dependently and independently of the Sec translocase complex, as well as at least some lipoproteins. The chain is Membrane protein insertase YidC 1 from Streptococcus agalactiae serotype V (strain ATCC BAA-611 / 2603 V/R).